The sequence spans 1063 residues: Endo-1,4-beta-xylanase 2 (1063 aa).

CBM-cenC domains are found at residues Asn5–Pro146, Asn183–Pro313, Asn348–Pro482, and Asn517–Ser662. A GH10 domain is found at Ser711 to Ile1006. The Proton donor role is filled by Glu840. Glu941 serves as the catalytic Nucleophile.

It belongs to the glycosyl hydrolase 10 (cellulase F) family.

It carries out the reaction Endohydrolysis of (1-&gt;4)-beta-D-xylosidic linkages in xylans.. The protein operates within glycan degradation; xylan degradation. In terms of biological role, binds to and hydrolyzes insoluble and soluble xylan substrates. The polypeptide is Endo-1,4-beta-xylanase 2 (Arabidopsis thaliana (Mouse-ear cress)).